Reading from the N-terminus, the 209-residue chain is Lysine-rich arabinogalactan protein 18 (209 aa).

A signal peptide spans 1–21; that stretch reads MDRNFLLTVTLICIVVAGVGG. A disordered region spans residues 21-185; that stretch reads GQSPISSPTK…PSADDQSGAA (165 aa). Over residues 23–79 the composition is skewed to low complexity; the sequence is SPISSPTKSPTTPSAPTTSPTKSPAVTSPTTAPAKTPTASASSPVESPKSPAPVSES. Pro residues-rich tracts occupy residues 80 to 95 and 103 to 119; these read SPPP…PVPA and SSPP…PAPV. A compositionally biased stretch (basic residues) spans 132–145; that stretch reads SKHKKTTKKSKKHQ. The span at 149–164 shows a compositional bias: pro residues; the sequence is APAPELLGPPAPPTES. G183 carries GPI-anchor amidated glycine lipidation. Positions 184–209 are cleaved as a propeptide — removed in mature form; sequence AASTRVLRNVAVGAVATAWAVLVMAF.

Belongs to the lysine-rich AGP family. Post-translationally, O-glycosylated on the hydroxyproline residues. In terms of tissue distribution, predominantly expressed in flowers, and moderately expressed in roots, stems and young leaves.

The protein localises to the cell membrane. Functionally, proteoglycan that seems to be implicated in diverse developmental roles such as differentiation, cell-cell recognition, embryogenesis and programmed cell death. The protein is Lysine-rich arabinogalactan protein 18 (AGP18) of Arabidopsis thaliana (Mouse-ear cress).